Here is an 85-residue protein sequence, read N- to C-terminus: Sec-independent protein translocase protein TatA (85 aa).

The helical transmembrane segment at 1-21 threads the bilayer; that stretch reads MGSFSIWHWLIVLVIIMMVFG. Residues 39–51 show a composition bias toward basic and acidic residues; it reads FKDGMREGQEDKP. The segment at 39-85 is disordered; sequence FKDGMREGQEDKPAGSQQPQQTAGQPPRELHDATTIDVEARDKSKQG. The segment covering 53-62 has biased composition (polar residues); that stretch reads GSQQPQQTAG. Basic and acidic residues predominate over residues 66–85; that stretch reads RELHDATTIDVEARDKSKQG.

This sequence belongs to the TatA/E family. The Tat system comprises two distinct complexes: a TatABC complex, containing multiple copies of TatA, TatB and TatC subunits, and a separate TatA complex, containing only TatA subunits. Substrates initially bind to the TatABC complex, which probably triggers association of the separate TatA complex to form the active translocon.

It is found in the cell inner membrane. In terms of biological role, part of the twin-arginine translocation (Tat) system that transports large folded proteins containing a characteristic twin-arginine motif in their signal peptide across membranes. TatA could form the protein-conducting channel of the Tat system. The sequence is that of Sec-independent protein translocase protein TatA from Ralstonia pickettii (strain 12J).